A 504-amino-acid polypeptide reads, in one-letter code: Putative arrestin-related trafficking adapter SPBC839.02 (504 aa).

The tract at residues 481-504 is disordered; sequence QAPPPKYDDIFQSGSSHDENHDDN.

This sequence belongs to the ALY1 family.

Its function is as follows. May regulate endocytosis in response to extracellular stimuli. This chain is Putative arrestin-related trafficking adapter SPBC839.02, found in Schizosaccharomyces pombe (strain 972 / ATCC 24843) (Fission yeast).